We begin with the raw amino-acid sequence, 1387 residues long: DNA-directed RNA polymerase subunit beta'' (1387 aa).

Zn(2+) is bound by residues C220, C291, C298, and C301.

Belongs to the RNA polymerase beta' chain family. RpoC2 subfamily. In terms of assembly, in plastids the minimal PEP RNA polymerase catalytic core is composed of four subunits: alpha, beta, beta', and beta''. When a (nuclear-encoded) sigma factor is associated with the core the holoenzyme is formed, which can initiate transcription. Zn(2+) is required as a cofactor.

Its subcellular location is the plastid. The protein localises to the chloroplast. The catalysed reaction is RNA(n) + a ribonucleoside 5'-triphosphate = RNA(n+1) + diphosphate. Functionally, DNA-dependent RNA polymerase catalyzes the transcription of DNA into RNA using the four ribonucleoside triphosphates as substrates. This is DNA-directed RNA polymerase subunit beta'' from Carica papaya (Papaya).